The following is a 177-amino-acid chain: Adenine phosphoribosyltransferase (177 aa).

It belongs to the purine/pyrimidine phosphoribosyltransferase family. In terms of assembly, homodimer.

The protein resides in the cytoplasm. It catalyses the reaction AMP + diphosphate = 5-phospho-alpha-D-ribose 1-diphosphate + adenine. It functions in the pathway purine metabolism; AMP biosynthesis via salvage pathway; AMP from adenine: step 1/1. In terms of biological role, catalyzes a salvage reaction resulting in the formation of AMP, that is energically less costly than de novo synthesis. This Leuconostoc citreum (strain KM20) protein is Adenine phosphoribosyltransferase.